The chain runs to 212 residues: MLNVIATGLSLKARGKRRRQRWVDDGRVLALGESRRSSAISVADVVASLTRDVADFPVPGVEFKDLTPLFADRRGLAAVTEALADRASGADLVAGVDARGFLVAAAVATRLEVGVLAVRKGGKLPRPVLSEEYYRAYGAATLEILAEGIEVAGRRVVIIDDVLATGGTIGATRRLLERGGANVAGAAVVVELAGLSGRAALAPLPVHSLSRL.

Belongs to the purine/pyrimidine phosphoribosyltransferase family. In terms of assembly, homodimer.

It localises to the cytoplasm. The enzyme catalyses AMP + diphosphate = 5-phospho-alpha-D-ribose 1-diphosphate + adenine. It functions in the pathway purine metabolism; AMP biosynthesis via salvage pathway; AMP from adenine: step 1/1. Catalyzes a salvage reaction resulting in the formation of AMP, that is energically less costly than de novo synthesis. In Mycobacterium tuberculosis (strain ATCC 25618 / H37Rv), this protein is Adenine phosphoribosyltransferase.